Reading from the N-terminus, the 217-residue chain is Trimethylamine corrinoid protein (217 aa).

In terms of domain architecture, B12-binding N-terminal spans 1-92; it reads MANKEEIIAK…EMEKRKSQTK (92 aa). In terms of domain architecture, B12-binding spans 94–217; that stretch reads LGTVAIGTIE…VAKVKAALNV (124 aa). His-107 serves as a coordination point for methylcob(III)alamin.

It belongs to the methylamine corrinoid protein family. In terms of assembly, can form a complex with MttB.

Its pathway is one-carbon metabolism; methanogenesis from trimethylamine. Functionally, acts probably as a methyl group carrier between MttB and either MtbA or MtaA. The protein is Trimethylamine corrinoid protein of Methanosarcina barkeri.